A 135-amino-acid polypeptide reads, in one-letter code: Large ribosomal subunit protein uL16 (135 aa).

It belongs to the universal ribosomal protein uL16 family. As to quaternary structure, part of the 50S ribosomal subunit.

Functionally, binds 23S rRNA and is also seen to make contacts with the A and possibly P site tRNAs. The sequence is that of Large ribosomal subunit protein uL16 from Bdellovibrio bacteriovorus (strain ATCC 15356 / DSM 50701 / NCIMB 9529 / HD100).